The following is a 141-amino-acid chain: NADH-quinone oxidoreductase subunit A (141 aa).

Transmembrane regions (helical) follow at residues 24–44, 77–97, and 106–126; these read LLAL…LLLA, VPFY…AFIA, and LGWA…VALI.

It belongs to the complex I subunit 3 family. As to quaternary structure, NDH-1 is composed of 14 different subunits. Subunits NuoA, H, J, K, L, M, N constitute the membrane sector of the complex.

The protein localises to the cell inner membrane. It catalyses the reaction a quinone + NADH + 5 H(+)(in) = a quinol + NAD(+) + 4 H(+)(out). In terms of biological role, NDH-1 shuttles electrons from NADH, via FMN and iron-sulfur (Fe-S) centers, to quinones in the respiratory chain. The immediate electron acceptor for the enzyme in this species is believed to be ubiquinone. Couples the redox reaction to proton translocation (for every two electrons transferred, four hydrogen ions are translocated across the cytoplasmic membrane), and thus conserves the redox energy in a proton gradient. The protein is NADH-quinone oxidoreductase subunit A of Syntrophotalea carbinolica (strain DSM 2380 / NBRC 103641 / GraBd1) (Pelobacter carbinolicus).